A 216-amino-acid chain; its full sequence is Putative germin-like protein 2-1 (216 aa).

The N-terminal stretch at methionine 1–alanine 21 is a signal peptide. A disulfide bridge links cysteine 31 with cysteine 46. A Cupin type-1 domain is found at serine 60–aspartate 210. Asparagine 67 carries an N-linked (GlcNAc...) asparagine glycan. Residues histidine 108, histidine 110, glutamate 115, and histidine 156 each contribute to the Mn(2+) site.

Belongs to the germin family. Oligomer (believed to be a pentamer but probably hexamer).

Its subcellular location is the secreted. It localises to the extracellular space. The protein resides in the apoplast. May play a role in plant defense. Probably has no oxalate oxidase activity even if the active site is conserved. The sequence is that of Putative germin-like protein 2-1 from Oryza sativa subsp. japonica (Rice).